The chain runs to 352 residues: Protein RecA (352 aa).

65-72 (GPESSGKT) is a binding site for ATP. The segment at 333 to 352 (VKAAANREPVEEVEEADTDI) is disordered. The span at 343–352 (EEVEEADTDI) shows a compositional bias: acidic residues.

Belongs to the RecA family.

The protein resides in the cytoplasm. Its function is as follows. Can catalyze the hydrolysis of ATP in the presence of single-stranded DNA, the ATP-dependent uptake of single-stranded DNA by duplex DNA, and the ATP-dependent hybridization of homologous single-stranded DNAs. It interacts with LexA causing its activation and leading to its autocatalytic cleavage. In Pseudomonas fluorescens, this protein is Protein RecA.